A 589-amino-acid chain; its full sequence is F-box only protein 24 (589 aa).

In terms of domain architecture, F-box spans 23 to 69; sequence PISVQLFPPELVEHIVSFLPVKDLVALGQTCHYFHEVCDAEGVWRRI. An RCC1 repeat occupies 386–435; that stretch reads GRIFMQGNNRYGQLGTGDKMDRGEPTQVHYLQRPIALWCGLNHSLVLSQT. Residues 506 to 526 form a disordered region; sequence VGGSPEPSQGAGAPQDPGGTA.

Directly interacts with SKP1 and CUL1.

Its function is as follows. Substrate-recognition component of the SCF (SKP1-CUL1-F-box protein)-type E3 ubiquitin ligase complex. The sequence is that of F-box only protein 24 (Fbxo24) from Mus musculus (Mouse).